The following is a 760-amino-acid chain: DNA-directed RNA polymerase subunit beta' (760 aa).

Cys76, Cys78, Cys90, and Cys93 together coordinate Zn(2+). Mg(2+) contacts are provided by Asp594, Asp596, and Asp598.

Belongs to the RNA polymerase beta' chain family. RpoC1 subfamily. In plastids the minimal PEP RNA polymerase catalytic core is composed of four subunits: alpha, beta, beta', and beta''. When a (nuclear-encoded) sigma factor is associated with the core the holoenzyme is formed, which can initiate transcription. It depends on Mg(2+) as a cofactor. Requires Zn(2+) as cofactor.

The protein resides in the plastid. The protein localises to the chloroplast. The catalysed reaction is RNA(n) + a ribonucleoside 5'-triphosphate = RNA(n+1) + diphosphate. In terms of biological role, DNA-dependent RNA polymerase catalyzes the transcription of DNA into RNA using the four ribonucleoside triphosphates as substrates. In Bigelowiella natans (Pedinomonas minutissima), this protein is DNA-directed RNA polymerase subunit beta'.